We begin with the raw amino-acid sequence, 348 residues long: Matrix protein (348 aa).

The cysteines at positions 251 and 295 are disulfide-linked.

It belongs to the morbillivirus/respirovirus/rubulavirus M protein family.

It is found in the virion. The M protein has a crucial role in virus assembly and interacts with the RNP complex as well as with the viral membrane. This Homo sapiens (Human) protein is Matrix protein (M).